Here is a 480-residue protein sequence, read N- to C-terminus: Probable efflux pump outer membrane protein SepC (480 aa).

Residues 1 to 16 (MKTHYLSIALSVALSG) form the signal peptide. The N-palmitoyl cysteine moiety is linked to residue C17. Residue C17 is the site of S-diacylglycerol cysteine attachment.

This sequence belongs to the outer membrane factor (OMF) (TC 1.B.17) family.

It is found in the cell outer membrane. Functionally, probable outer membrane component of the SepABC efflux pump with unknown specificity. This chain is Probable efflux pump outer membrane protein SepC (sepC), found in Pseudomonas putida (strain ATCC 700007 / DSM 6899 / JCM 31910 / BCRC 17059 / LMG 24140 / F1).